The chain runs to 314 residues: DNA-directed RNA polymerase subunit alpha (314 aa).

The segment at 1-228 (MAQFHYECVE…SLFEPLKDIT (228 aa)) is alpha N-terminal domain (alpha-NTD). Residues 240–314 (DPTSQIPIEE…LPQEKVAKAT (75 aa)) form an alpha C-terminal domain (alpha-CTD) region.

This sequence belongs to the RNA polymerase alpha chain family. In cyanobacteria the RNAP catalytic core is composed of 2 alpha, 1 beta, 1 beta', 1 gamma and 1 omega subunit. When a sigma factor is associated with the core the holoenzyme is formed, which can initiate transcription.

It carries out the reaction RNA(n) + a ribonucleoside 5'-triphosphate = RNA(n+1) + diphosphate. In terms of biological role, DNA-dependent RNA polymerase catalyzes the transcription of DNA into RNA using the four ribonucleoside triphosphates as substrates. This is DNA-directed RNA polymerase subunit alpha from Trichodesmium erythraeum (strain IMS101).